The following is a 335-amino-acid chain: MSNIVGIEYNRVTNTTSTDFPGFSKDAENEWNVEKFKKDFEVNISSLDAREANFDLINIDTSIANAFRRIMISEVPSVAAEYVYFFNNTSVIQDEVLAHRIGLVPLKVDPDMLTWVDSNLPDDEKFTDENTIVLSLNVKCTRNPDAPKGSTDPKELYNNAHVYARDLKFEPQGRQSTTFADCPVVPADPDILLAKLRPGQEISLKAHCILGIGGDHAKFSPVSTASYRLLPQINILQPIKGESARRFQKCFPPGVIGIDEGSDEAYVKDARKDTVSREVLRYEEFADKVKLGRVRNHFIFNVESAGAMTPEEIFFKSVRILKNKAEYLKNCPITQ.

N-acetylserine is present on serine 2. Serine 17 is modified (phosphoserine).

Belongs to the archaeal Rpo3/eukaryotic RPB3 RNA polymerase subunit family. Component of the RNA polymerase I (Pol I) complex consisting of 14 subunits: RPA135, RPA190, RPC40, RPA14, RPB5, RPO26, RPA43, RPB8, RPA12, RPB10, RPC19, RPC10, RPA49 and RPA34. The complex is composed of a horseshoe-shaped core containing ten subunits (RPA135, RPA190, RPB5, RPO26, RPB8, RPB10, RPC10, RPA12, RPC19 and RPC40) where RPA135 and RPA190 form the DNA-binding cleft. Outside of the core, RPA14 and RPA43 form the stalk that mediates interactions with transcription initiation factors and newly synthesized RNA. Component of the RNA polymerase III (Pol III) complex consisting of at least 17 subunits. Interacts with the RPC19/RPAC2 and RPC53/RPC4. Interacts with retrotransposons Ty integrase, targeting Ty1, Ty2 and Ty4 integration upstream of pol III-transcribed genes.

It localises to the nucleus. Its subcellular location is the nucleolus. In terms of biological role, DNA-dependent RNA polymerases catalyze the transcription of DNA into RNA using the four ribonucleoside triphosphates as substrates. Common component of RNA polymerases I (Pol I) and III (Pol III) which synthesize ribosomal RNA precursors and small RNAs, such as 5S rRNA and tRNAs, respectively. RPC40 is part of the polymerase core and may function as a clamp element that moves to open and close the cleft. Plays an important role in targeting retrotransposons Ty integration upstream of pol III-transcribed genes such as tRNA genes, allowing Ty1, Ty2 and Ty4 to proliferate and yet minimizing genetic damage. This chain is DNA-directed RNA polymerases I and III subunit RPAC1, found in Saccharomyces cerevisiae (strain ATCC 204508 / S288c) (Baker's yeast).